Here is a 392-residue protein sequence, read N- to C-terminus: Galactokinase (392 aa).

Alpha-D-galactose contacts are provided by Arg37, Glu43, His44, and Asp46. ATP contacts are provided by Gly136, Gly138, Ser140, and Ser141. Residue Asp186 coordinates alpha-D-galactose. Catalysis depends on Asp186, which acts as the Proton acceptor. At Ser230 the chain carries Phosphoserine. Tyr236 contributes to the alpha-D-galactose binding site.

This sequence belongs to the GHMP kinase family. GalK subfamily. Homodimer.

The catalysed reaction is alpha-D-galactose + ATP = alpha-D-galactose 1-phosphate + ADP + H(+). The protein operates within carbohydrate metabolism; galactose metabolism. Its function is as follows. Catalyzes the transfer of a phosphate from ATP to alpha-D-galactose and participates in the first committed step in the catabolism of galactose. This Bos taurus (Bovine) protein is Galactokinase (GALK1).